Reading from the N-terminus, the 433-residue chain is Histidinol dehydrogenase (433 aa).

The NAD(+) site is built by tyrosine 130, glutamine 191, and asparagine 214. Serine 237, glutamine 259, and histidine 262 together coordinate substrate. Residues glutamine 259 and histidine 262 each contribute to the Zn(2+) site. Active-site proton acceptor residues include glutamate 327 and histidine 328. The substrate site is built by histidine 328, aspartate 361, glutamate 415, and histidine 420. Residue aspartate 361 coordinates Zn(2+). Residue histidine 420 coordinates Zn(2+).

The protein belongs to the histidinol dehydrogenase family. The cofactor is Zn(2+).

It carries out the reaction L-histidinol + 2 NAD(+) + H2O = L-histidine + 2 NADH + 3 H(+). Its pathway is amino-acid biosynthesis; L-histidine biosynthesis; L-histidine from 5-phospho-alpha-D-ribose 1-diphosphate: step 9/9. Catalyzes the sequential NAD-dependent oxidations of L-histidinol to L-histidinaldehyde and then to L-histidine. This chain is Histidinol dehydrogenase, found in Ruegeria pomeroyi (strain ATCC 700808 / DSM 15171 / DSS-3) (Silicibacter pomeroyi).